Here is a 145-residue protein sequence, read N- to C-terminus: Brain and acute leukemia cytoplasmic protein (145 aa).

G2 carries N-myristoyl glycine lipidation. C3 carries the S-palmitoyl cysteine lipid modification. Positions 3 to 35 (CGGSRADAIEPRYYESWTRETESTWLTYTDSDA) are interaction with CAMK2A. Disordered stretches follow at residues 36-56 (LPSA…AGVL) and 87-109 (CPNS…WATE). Over residues 87–105 (CPNSQNLSSGPLTQKQNGL) the composition is skewed to polar residues.

As to quaternary structure, interacts with CAMK2A. Post-translationally, palmitoylation and myristoylation target the protein to the lipid rafts. As to expression, at the mRNA level, predominantly expressed in the brain. At the protein level, mainly expressed in muscle tissues. In skeletal muscles, expressed in cranial and facial muscles, muscles of the neck, back, thoracic wall, and thigh. Also found in the contractile myoepithelial cell layer of salivary glands. In smooth muscles, expressed in the gastric wall, uterus, urinary bladder, as well as in the muscular lining around seminiferous tubules, prostatic ducts, epididymis, vas deferens, walls of small blood vessels in the dermis, and fascial layers between muscle fibers, brain, and around the spinal cord. Strongly expressed in myocardium. High expression levels are observed in placental spongiotrophoblast and adjacent myometrium. Also expressed in bone marrow hematopoietic cells. In the mature thymus, expressed in rare scattered cells. Weakly expressed in the brain neuropil, particularly near the hippocampus, and spinal cord white matter. Not detected in skin keratinocytes or lung (at protein level).

It localises to the cytoplasm. The protein localises to the synapse. It is found in the synaptosome. Its subcellular location is the membrane raft. The protein resides in the postsynaptic density. May play a synaptic role at the postsynaptic lipid rafts possibly through interaction with CAMK2A. The chain is Brain and acute leukemia cytoplasmic protein (Baalc) from Mus musculus (Mouse).